Consider the following 569-residue polypeptide: Cytochrome P450 monooxygenase abl1 (569 aa).

A heme-binding site is contributed by C464.

It belongs to the cytochrome P450 family. It depends on heme as a cofactor.

It participates in hormone biosynthesis. Its function is as follows. Cytochrome P450 monooxygenase; part of the gene cluster that mediates the biosynthesis of abscisic acid (ABA), a phytohormone that acts antagonistically toward salicylic acid (SA), jasmonic acid (JA) and ethylene (ETH) signaling, to impede plant defense responses. The first step of the pathway catalyzes the reaction from farnesyl diphosphate to alpha-ionylideneethane performed by the alpha-ionylideneethane synthase abl3 via a three-step reaction mechanism involving 2 neutral intermediates, beta-farnesene and allofarnesene. The cytochrome P450 monooxygenase abl1 might then be involved in the conversion of alpha-ionylideneethane to alpha-ionylideneacetic acid. Alpha-ionylideneacetic acid is further converted to abscisic acid in 2 steps involving the cytochrome P450 monooxygenase abl2 and the short-chain dehydrogenase/reductase abl4, via the intermediates 1'-deoxy-ABA or 1',4'-trans-diol-ABA, depending on the order of action of these 2 enzymes. Abl2 is responsible for the hydroxylation of carbon atom C-1' and abl4 might be involved in the oxidation of the C-4' carbon atom. The sequence is that of Cytochrome P450 monooxygenase abl1 from Leptosphaeria maculans (strain JN3 / isolate v23.1.3 / race Av1-4-5-6-7-8) (Blackleg fungus).